The sequence spans 175 residues: MDEDVLPGEVLAIEGIFMACGLNEPEYLYHPLLSPIKLYITGLMRDKESLFEAMLANVRFHSTTGINQLGLSMLQVSGDGNMNWGRALAILTFGSFVAQKLSNEPHLRDFALAVLPVYAYEAIGPQWFRARGGWRGLKAYCTQVLTRRRGRRMTALLGSIALLATILAAVAMSRR.

Residues 37-42 are mediates interaction with human NOP53 and localization to host nucleolus; sequence KLYITG. Residues 153 to 173 form a helical membrane-spanning segment; sequence MTALLGSIALLATILAAVAMS.

The protein belongs to the Bcl-2 family. Interacts with human NOP53; may sequester ORF16 in host nucleolus and reduce its antiapoptotic activity. Interacts with ORF55.

It is found in the host membrane. It localises to the host mitochondrion. The protein localises to the host nucleus. The protein resides in the host nucleolus. Its function is as follows. Plays a role in the protection against apoptosis mediated by cytotoxic cells during the immune response to acute and persistent viral infection. Contributes therefore to latency establishment. Also plays a role in the inhibition of host starvation-induced autophagy which ultimately contributes to the viral chronic infection. Also participates in the viral genome replication within host nucleus. The sequence is that of Apoptosis regulator Bcl-2 homolog (vBCL2) from Homo sapiens (Human).